The following is a 99-amino-acid chain: Beta-defensin 127 (99 aa).

The first 20 residues, 1–20, serve as a signal peptide directing secretion; the sequence is MGLFMIIAILLFQKPTVTEQ. 3 disulfide bridges follow: Cys24–Cys53, Cys33–Cys47, and Cys37–Cys54. A propeptide spanning residues 66–99 is cleaved from the precursor; sequence ITKPPRPKPATLALTLQDYVTIIENFPSLKTQST.

The protein belongs to the beta-defensin family.

It localises to the secreted. Has antibacterial activity. In Homo sapiens (Human), this protein is Beta-defensin 127 (DEFB127).